The sequence spans 357 residues: tRNA N6-adenosine threonylcarbamoyltransferase (357 aa).

The Fe cation site is built by His119 and His123. Substrate contacts are provided by residues 141-145 (LISGG), Asp174, Gly187, and Asn284. Asp312 provides a ligand contact to Fe cation.

This sequence belongs to the KAE1 / TsaD family. Fe(2+) serves as cofactor.

It is found in the cytoplasm. It carries out the reaction L-threonylcarbamoyladenylate + adenosine(37) in tRNA = N(6)-L-threonylcarbamoyladenosine(37) in tRNA + AMP + H(+). In terms of biological role, required for the formation of a threonylcarbamoyl group on adenosine at position 37 (t(6)A37) in tRNAs that read codons beginning with adenine. Is involved in the transfer of the threonylcarbamoyl moiety of threonylcarbamoyl-AMP (TC-AMP) to the N6 group of A37, together with TsaE and TsaB. TsaD likely plays a direct catalytic role in this reaction. This Pelagibacter ubique (strain HTCC1062) protein is tRNA N6-adenosine threonylcarbamoyltransferase.